A 343-amino-acid polypeptide reads, in one-letter code: Aspartate carbamoyltransferase catalytic subunit (343 aa).

Positions 91 and 92 each coordinate carbamoyl phosphate. Residue K119 coordinates L-aspartate. Residues R141, H171, and Q174 each coordinate carbamoyl phosphate. 2 residues coordinate L-aspartate: R204 and R259. The carbamoyl phosphate site is built by G300 and P301.

Belongs to the aspartate/ornithine carbamoyltransferase superfamily. ATCase family. Heterododecamer (2C3:3R2) of six catalytic PyrB chains organized as two trimers (C3), and six regulatory PyrI chains organized as three dimers (R2).

The catalysed reaction is carbamoyl phosphate + L-aspartate = N-carbamoyl-L-aspartate + phosphate + H(+). Its pathway is pyrimidine metabolism; UMP biosynthesis via de novo pathway; (S)-dihydroorotate from bicarbonate: step 2/3. Catalyzes the condensation of carbamoyl phosphate and aspartate to form carbamoyl aspartate and inorganic phosphate, the committed step in the de novo pyrimidine nucleotide biosynthesis pathway. This Burkholderia thailandensis (strain ATCC 700388 / DSM 13276 / CCUG 48851 / CIP 106301 / E264) protein is Aspartate carbamoyltransferase catalytic subunit.